A 325-amino-acid chain; its full sequence is tRNA dimethylallyltransferase (325 aa).

ATP is bound at residue 12–19; the sequence is GPTASGKT. 14–19 is a binding site for substrate; that stretch reads TASGKT. Interaction with substrate tRNA regions lie at residues 37–40, 161–165, and 244–249; these read DSAL, QRIHR, and RCVGYR.

This sequence belongs to the IPP transferase family. In terms of assembly, monomer. Mg(2+) serves as cofactor.

The catalysed reaction is adenosine(37) in tRNA + dimethylallyl diphosphate = N(6)-dimethylallyladenosine(37) in tRNA + diphosphate. In terms of biological role, catalyzes the transfer of a dimethylallyl group onto the adenine at position 37 in tRNAs that read codons beginning with uridine, leading to the formation of N6-(dimethylallyl)adenosine (i(6)A). The polypeptide is tRNA dimethylallyltransferase (Chromobacterium violaceum (strain ATCC 12472 / DSM 30191 / JCM 1249 / CCUG 213 / NBRC 12614 / NCIMB 9131 / NCTC 9757 / MK)).